Here is a 304-residue protein sequence, read N- to C-terminus: Nucleotide-binding protein KRH_12070 (304 aa).

27–34 (GMSGAGRS) is an ATP binding site. 78–81 (DVRG) serves as a coordination point for GTP.

The protein belongs to the RapZ-like family.

Displays ATPase and GTPase activities. In Kocuria rhizophila (strain ATCC 9341 / DSM 348 / NBRC 103217 / DC2201), this protein is Nucleotide-binding protein KRH_12070.